A 146-amino-acid chain; its full sequence is uncharacterized protein (146 aa).

The HTH marR-type domain maps to 9-141 (VADIEKSLRH…FEKSLMKLQH (133 aa)). Residues 55–78 (IGELSGKMYLACSTTTDLIDRMQK) constitute a DNA-binding region (H-T-H motif).

This is an uncharacterized protein from Bacillus subtilis (strain 168).